A 127-amino-acid chain; its full sequence is uncharacterized protein (127 aa).

The helical transmembrane segment at V85–D107 threads the bilayer.

The protein resides in the mitochondrion membrane. This is an uncharacterized protein from Dictyostelium discoideum (Social amoeba).